The chain runs to 696 residues: Elongation factor G (696 aa).

One can recognise a tr-type G domain in the interval 8–288; the sequence is EDYRNFGIMA…AVVEYLPSPA (281 aa). GTP contacts are provided by residues 17–24, 86–90, and 140–143; these read AHIDAGKT, DTPGH, and NKMD.

It belongs to the TRAFAC class translation factor GTPase superfamily. Classic translation factor GTPase family. EF-G/EF-2 subfamily.

Its subcellular location is the cytoplasm. Catalyzes the GTP-dependent ribosomal translocation step during translation elongation. During this step, the ribosome changes from the pre-translocational (PRE) to the post-translocational (POST) state as the newly formed A-site-bound peptidyl-tRNA and P-site-bound deacylated tRNA move to the P and E sites, respectively. Catalyzes the coordinated movement of the two tRNA molecules, the mRNA and conformational changes in the ribosome. The chain is Elongation factor G from Mesorhizobium japonicum (strain LMG 29417 / CECT 9101 / MAFF 303099) (Mesorhizobium loti (strain MAFF 303099)).